Consider the following 489-residue polypeptide: COX3 mRNA-specific translational activator PET494 (489 aa).

It is found in the mitochondrion inner membrane. In terms of biological role, required for the expression of the mitochondrial gene for cytochrome c oxidase subunit III (COX3). The polypeptide is COX3 mRNA-specific translational activator PET494 (PET494) (Saccharomyces bayanus (Yeast)).